A 367-amino-acid polypeptide reads, in one-letter code: Centromere protein L (367 aa).

The protein belongs to the CENP-L/IML3 family.

The protein localises to the nucleus. It localises to the chromosome. Its subcellular location is the centromere. Its function is as follows. Probable component of a centromeric complex involved in assembly of kinetochore proteins, mitotic progression and chromosome segregation. In Danio rerio (Zebrafish), this protein is Centromere protein L (cenpl).